We begin with the raw amino-acid sequence, 271 residues long: Regulatory protein RecX (271 aa).

Belongs to the RecX family.

It is found in the cytoplasm. In terms of biological role, modulates RecA activity. The polypeptide is Regulatory protein RecX (Lactobacillus johnsonii (strain CNCM I-12250 / La1 / NCC 533)).